The sequence spans 252 residues: 2-succinyl-6-hydroxy-2,4-cyclohexadiene-1-carboxylate synthase (252 aa).

This sequence belongs to the AB hydrolase superfamily. MenH family. As to quaternary structure, monomer.

It carries out the reaction 5-enolpyruvoyl-6-hydroxy-2-succinyl-cyclohex-3-ene-1-carboxylate = (1R,6R)-6-hydroxy-2-succinyl-cyclohexa-2,4-diene-1-carboxylate + pyruvate. It participates in quinol/quinone metabolism; 1,4-dihydroxy-2-naphthoate biosynthesis; 1,4-dihydroxy-2-naphthoate from chorismate: step 3/7. The protein operates within quinol/quinone metabolism; menaquinone biosynthesis. Catalyzes a proton abstraction reaction that results in 2,5-elimination of pyruvate from 2-succinyl-5-enolpyruvyl-6-hydroxy-3-cyclohexene-1-carboxylate (SEPHCHC) and the formation of 2-succinyl-6-hydroxy-2,4-cyclohexadiene-1-carboxylate (SHCHC). The chain is 2-succinyl-6-hydroxy-2,4-cyclohexadiene-1-carboxylate synthase from Escherichia coli O81 (strain ED1a).